Consider the following 51-residue polypeptide: MNGGGVFTDILAASGRIFEVMVEGHWATVGYLFDSLGKGVSRINQNAYGNM.

Residue His25 participates in a bacteriochlorophyll e binding.

The protein belongs to the BChl C/E-binding protein family.

Its subcellular location is the chlorosome. It is found in the chlorosome envelope. Component of the photosynthetic apparatus. The light harvesting B740 complex binds bacteriochlorophyll e. The sequence is that of Bacteriochlorophyll e-binding protein (csmA) from Chlorobium phaeovibrioides.